Reading from the N-terminus, the 414-residue chain is Succinylornithine transaminase (414 aa).

K260 carries the N6-(pyridoxal phosphate)lysine modification.

The protein belongs to the class-III pyridoxal-phosphate-dependent aminotransferase family. AstC subfamily. It depends on pyridoxal 5'-phosphate as a cofactor.

It carries out the reaction N(2)-succinyl-L-ornithine + 2-oxoglutarate = N-succinyl-L-glutamate 5-semialdehyde + L-glutamate. The protein operates within amino-acid degradation; L-arginine degradation via AST pathway; L-glutamate and succinate from L-arginine: step 3/5. In terms of biological role, catalyzes the transamination of N(2)-succinylornithine and alpha-ketoglutarate into N(2)-succinylglutamate semialdehyde and glutamate. Can also act as an acetylornithine aminotransferase. In Yersinia pestis bv. Antiqua (strain Antiqua), this protein is Succinylornithine transaminase.